The primary structure comprises 417 residues: Phosphoglycerate kinase 2 (417 aa).

The (2R)-3-phosphoglycerate site is built by Val23, Asp24, Phe25, Asn26, Asn38, Arg39, Ser62, His63, Gly65, Arg66, Leu121, Arg122, His168, and Arg169. ADP is bound at residue Gly212. Gly212 provides a ligand contact to CDP. 2 residues coordinate AMP: Ala213 and Lys214. Ala213 provides a ligand contact to ATP. A Mg(2+)-binding site is contributed by Ala213. Residue Asp217 coordinates CDP. Residue Asp217 participates in Mg(2+) binding. Residue Lys218 participates in AMP binding. Lys218 is a binding site for ATP. Position 236 (Gly236) interacts with ADP. Gly236 contributes to the CDP binding site. 2 residues coordinate AMP: Gly237 and Gly312. ATP is bound by residues Gly237 and Gly312. Residues Gly337 and Phe342 each coordinate CDP. Phe342 provides a ligand contact to ADP. Glu343 contributes to the AMP binding site. Positions 343, 374, and 375 each coordinate ATP. Asp374 provides a ligand contact to Mg(2+).

It belongs to the phosphoglycerate kinase family. Monomer. It depends on Mg(2+) as a cofactor.

It is found in the cytoplasm. The protein resides in the mitochondrion. The catalysed reaction is (2R)-3-phosphoglycerate + ATP = (2R)-3-phospho-glyceroyl phosphate + ADP. It participates in carbohydrate degradation; glycolysis; pyruvate from D-glyceraldehyde 3-phosphate: step 2/5. In terms of biological role, catalyzes one of the two ATP producing reactions in the glycolytic pathway via the reversible conversion of 1,3-diphosphoglycerate to 3-phosphoglycerate. Both L- and D- forms of purine and pyrimidine nucleotides can be used as substrates, but the activity is much lower on pyrimidines. Negatively regulates the biosynthesis of acetyl-CoA from pyruvate in the mitochondrion. This Rhizopus niveus protein is Phosphoglycerate kinase 2 (PGK2).